A 311-amino-acid polypeptide reads, in one-letter code: Olfactory receptor 6C3 (311 aa).

Topologically, residues 1 to 22 are extracellular; the sequence is MNHTMVTEFVLLGLSDDPDLQI. N2 is a glycosylation site (N-linked (GlcNAc...) asparagine). A helical transmembrane segment spans residues 23–43; that stretch reads VIFLFLFITYILSVTGNLTII. Over 44-51 the chain is Cytoplasmic; it reads TLTFVDSH. The chain crosses the membrane as a helical span at residues 52 to 72; that stretch reads LQTPMYFFLRNFSFLEISFTT. Residues 73–96 lie on the Extracellular side of the membrane; sequence VCIPRFLGAIITRNKTISYNNCAA. A disulfide bridge connects residues C94 and C186. A helical membrane pass occupies residues 97–117; it reads QLFFFIFMGVTEFYILTAMSY. Topologically, residues 118-136 are cytoplasmic; sequence DRYVAICKPLHYTSIMNRK. The chain crosses the membrane as a helical span at residues 137 to 157; that stretch reads LCTLLVLCAWLSGFLTIFPPL. The Extracellular segment spans residues 158–194; it reads MLLLQLDYCASNVIDHFACDYFPLLQLSCSDTWLLEV. A helical membrane pass occupies residues 195 to 214; that stretch reads IGFYFALVTLLFTLALVILS. Residues 215 to 234 lie on the Cytoplasmic side of the membrane; sequence YMYIIRTILRIPSASQRKKA. A helical transmembrane segment spans residues 235-255; that stretch reads FSTCSSHMIVISISYGSCIFM. At 256 to 268 the chain is on the extracellular side; the sequence is YANPSAKEKASLT. The chain crosses the membrane as a helical span at residues 269–289; that stretch reads KGIAILNTSVAPMLNPFIYTL. The Cytoplasmic portion of the chain corresponds to 290 to 311; the sequence is RNQQVKQAFKNVVHKVVFYANQ.

This sequence belongs to the G-protein coupled receptor 1 family.

The protein resides in the cell membrane. Odorant receptor. The sequence is that of Olfactory receptor 6C3 (OR6C3) from Homo sapiens (Human).